Consider the following 455-residue polypeptide: Glycosyl hydrolase family 109 protein (455 aa).

Positions 1–33 (MAGIDRRGFLKASMASVAAAALAGCASQQGTSA) form a signal peptide, tat-type signal. NAD(+)-binding positions include 62–63 (ER), aspartate 84, glutamine 112, 133–136 (WALH), 153–154 (EV), and asparagine 182. Substrate is bound by residues tyrosine 211, arginine 230, 242-245 (YPTH), and tyrosine 324. Position 242 (tyrosine 242) interacts with NAD(+).

This sequence belongs to the Gfo/Idh/MocA family. Glycosyl hydrolase 109 subfamily. Requires NAD(+) as cofactor. Post-translationally, predicted to be exported by the Tat system. The position of the signal peptide cleavage has not been experimentally proven.

Functionally, glycosidase. The chain is Glycosyl hydrolase family 109 protein from Shewanella amazonensis (strain ATCC BAA-1098 / SB2B).